The following is a 181-amino-acid chain: Shikimate kinase (181 aa).

17 to 22 (GAGKTT) serves as a coordination point for ATP. Threonine 21 contributes to the Mg(2+) binding site. 3 residues coordinate substrate: aspartate 39, arginine 63, and glycine 85. Arginine 122 is a binding site for ATP. Residue arginine 141 coordinates substrate.

The protein belongs to the shikimate kinase family. Monomer. Mg(2+) serves as cofactor.

The protein resides in the cytoplasm. It carries out the reaction shikimate + ATP = 3-phosphoshikimate + ADP + H(+). It functions in the pathway metabolic intermediate biosynthesis; chorismate biosynthesis; chorismate from D-erythrose 4-phosphate and phosphoenolpyruvate: step 5/7. In terms of biological role, catalyzes the specific phosphorylation of the 3-hydroxyl group of shikimic acid using ATP as a cosubstrate. This is Shikimate kinase from Trichormus variabilis (strain ATCC 29413 / PCC 7937) (Anabaena variabilis).